The primary structure comprises 547 residues: Rho GTPase-activating protein 36 (547 aa).

Positions methionine 1 to glycine 40 are cleaved as a signal peptide. The 201-residue stretch at methionine 226 to phenylalanine 426 folds into the Rho-GAP domain. Residues phenylalanine 493 to proline 547 form a disordered region. The span at glutamate 524–alanine 538 shows a compositional bias: basic and acidic residues.

Functionally, GTPase activator for the Rho-type GTPases by converting them to an inactive GDP-bound state. The polypeptide is Rho GTPase-activating protein 36 (ARHGAP36) (Ailuropoda melanoleuca (Giant panda)).